The chain runs to 276 residues: MALLEVCGAPRGLRKACAVPALGSQLRSDPGHYSFSLRAPELAVPRGMQPTEFFQSLGENGEKNIRKEMVHGTTTLAFKFQHGVIVAVDSRATAGNYISSSRVNKVIEINPSLLGTMSGCAADCQYWERLLAKECRLYYLRNGERISVSAASKLLSNMVYQYRGMDLSMGSMICGWDKKGPGLYYVDQNGTRLSGNMFSTGSGSTYAYGVMDSGYQPSLSPEEAYELGRRAITYATHRDSYSGGIINMYHMKEDGWVKVESTDVNELLHQYQEANQ.

The propeptide at 1 to 72 (MALLEVCGAP…KNIRKEMVHG (72 aa)) is removed in mature form. Thr73 (nucleophile) is an active-site residue.

It belongs to the peptidase T1B family. In terms of assembly, the 26S proteasome consists of a 20S proteasome core and two 19S regulatory subunits. The 20S proteasome core is composed of 28 subunits that are arranged in four stacked rings, resulting in a barrel-shaped structure. The two end rings are each formed by seven alpha subunits, and the two central rings are each formed by seven beta subunits. The catalytic chamber with the active sites is on the inside of the barrel. Component of the immunoproteasome, where it displaces the equivalent housekeeping subunit PSMB5. Component of the spermatoproteasome, a form of the proteasome specifically found in testis. Directly interacts with POMP. In terms of processing, autocleaved. The resulting N-terminal Thr residue of the mature subunit is responsible for the nucleophile proteolytic activity.

The protein resides in the cytoplasm. It is found in the nucleus. The catalysed reaction is Cleavage of peptide bonds with very broad specificity.. Functionally, the proteasome is a multicatalytic proteinase complex which is characterized by its ability to cleave peptides with Arg, Phe, Tyr, Leu, and Glu adjacent to the leaving group at neutral or slightly basic pH. The proteasome has an ATP-dependent proteolytic activity. This subunit is involved in antigen processing to generate class I binding peptides. May participate in the generation of spliced peptides resulting from the ligation of two separate proteasomal cleavage products that are not contiguous in the parental protein. Required for adipocyte differentiation. The chain is Proteasome subunit beta type-8 (PSMB8) from Canis lupus familiaris (Dog).